Consider the following 411-residue polypeptide: MALYSISKPVGSKINKHSYQDENTLVGKQALSKGTEKTKLSTNFEINLPRRTVLSDVSNVGKNNADEKDTKKAKRSFDESNLSTNEEADKPVESKFVKKLKVYSKNADPSVETLQKDRVSNVDDHLSSNPLMAEEYAPEIFEYIRKLDLKCLPNPKYMDQQKELTWKMREILNEWLVEIHSNFCLMPETLYLAVNIIDRFLSRRSCSLSKFQLTGITALLIASKYEEVMCPSIQNFVYMTDGAFTVEDVCVAERYMLNVLNFDLSYPSPLNFLRKISQAEGYDAQTRTLGKYLTEIYLFDHDLLRYPMSKIAAAAMYLSRRLLRRGPWTPKLVESSGGYEEHELKEIAYIMLHYHNKPLEHKAFFQKYSSKRFLKASIFVHQLVRQRYSVNRTDDDDLQSEPSSSLTNDGH.

The Destruction box motif lies at 51-60 (RTVLSDVSNV). Residues 57-89 (VSNVGKNNADEKDTKKAKRSFDESNLSTNEEAD) are disordered. Positions 64-78 (NADEKDTKKAKRSFD) are enriched in basic and acidic residues. The Cyclin N-terminal domain maps to 139–265 (EIFEYIRKLD…MLNVLNFDLS (127 aa)). The interval 181–273 (SNFCLMPETL…LSYPSPLNFL (93 aa)) is interaction with pop1.

Belongs to the cyclin family. Cyclin AB subfamily. As to quaternary structure, associates with cdc2, res2 and rum1. Interacts with pop1 only when phosphorylated. In terms of processing, phosphorylated.

Its subcellular location is the nucleus. The protein localises to the cytoplasm. It localises to the cytoskeleton. The protein resides in the microtubule organizing center. It is found in the spindle pole body. In terms of biological role, essential for the control of the cell cycle at the G2/M and G1/S (mitosis) transition. Interacts with the cdc2 protein kinase to form MPF. Interaction with res2 promotes the phosphorylation of res1 and inhibits MBF-dependent gene transcription. Forms an autoregulating feedback-inhibition loop with MBF which is important for normal regulation of the cell cycle. G2/M cyclins accumulate steadily during G2 and are abruptly destroyed at mitosis. Negatively regulates conjugation via interacting with cell cycle 'start' genes. Degraded by skp1, pop1 and pop2 in the G2 and M phases of the cell cycle. In Schizosaccharomyces pombe (strain 972 / ATCC 24843) (Fission yeast), this protein is G2/mitotic-specific cyclin cig2 (cig2).